We begin with the raw amino-acid sequence, 89 residues long: Small ribosomal subunit protein bS18 (89 aa).

The protein belongs to the bacterial ribosomal protein bS18 family. Part of the 30S ribosomal subunit. Forms a tight heterodimer with protein bS6.

Its function is as follows. Binds as a heterodimer with protein bS6 to the central domain of the 16S rRNA, where it helps stabilize the platform of the 30S subunit. The chain is Small ribosomal subunit protein bS18 from Treponema denticola (strain ATCC 35405 / DSM 14222 / CIP 103919 / JCM 8153 / KCTC 15104).